A 727-amino-acid polypeptide reads, in one-letter code: Glycerol-3-phosphate dehydrogenase, mitochondrial (727 aa).

The transit peptide at 1 to 42 directs the protein to the mitochondrion; sequence MAFQKVVKGTILMGGGALATVLGLSQFAHYRRKQVSLAYVEA. 71-99 provides a ligand contact to FAD; the sequence is DILVIGGGATGCGCALDAVTRGLKTALVE. Position 601 is a phosphotyrosine (Y601). EF-hand domains lie at 623-658 and 659-694; these read PDIDRYKKRFHMFDEDEKGFITIVDVQRVLESINVQ and MDEDTLHEILCEVDLNKNGQVELHEFLQLMSAVHTG. Ca(2+)-binding residues include D672, N674, N676, Q678, and E683.

Belongs to the FAD-dependent glycerol-3-phosphate dehydrogenase family. The cofactor is FAD.

It is found in the mitochondrion. It catalyses the reaction a quinone + sn-glycerol 3-phosphate = dihydroxyacetone phosphate + a quinol. The protein operates within polyol metabolism; glycerol degradation via glycerol kinase pathway; glycerone phosphate from sn-glycerol 3-phosphate (anaerobic route): step 1/1. Calcium-binding enhance the activity of the enzyme. Functionally, calcium-responsive mitochondrial glycerol-3-phosphate dehydrogenase which seems to be a key component of the pancreatic beta-cell glucose-sensing device. This is Glycerol-3-phosphate dehydrogenase, mitochondrial from Rattus norvegicus (Rat).